A 355-amino-acid chain; its full sequence is Protein-glutamate methylesterase/protein-glutamine glutaminase (355 aa).

Residues 7–123 form the Response regulatory domain; it reads AAVVVDDSQF…SVGIKQQQDE (117 aa). Position 57 is a 4-aspartylphosphate (aspartate 57). The disordered stretch occupies residues 139-159; the sequence is TEAAAERTTSTATSTTTSRSA. The CheB-type methylesterase domain occupies 161-355; the sequence is EYVDKPTLVI…DGVLDTIMRE (195 aa). Active-site residues include serine 173, histidine 200, and aspartate 297.

This sequence belongs to the CheB family. Phosphorylated by CheA. Phosphorylation of the N-terminal regulatory domain activates the methylesterase activity.

It is found in the cytoplasm. It catalyses the reaction [protein]-L-glutamate 5-O-methyl ester + H2O = L-glutamyl-[protein] + methanol + H(+). The catalysed reaction is L-glutaminyl-[protein] + H2O = L-glutamyl-[protein] + NH4(+). Its function is as follows. Involved in chemotaxis. Part of a chemotaxis signal transduction system that modulates chemotaxis in response to various stimuli. Catalyzes the demethylation of specific methylglutamate residues introduced into the chemoreceptors (methyl-accepting chemotaxis proteins or MCP) by CheR. Also mediates the irreversible deamidation of specific glutamine residues to glutamic acid. The sequence is that of Protein-glutamate methylesterase/protein-glutamine glutaminase from Natronomonas pharaonis (strain ATCC 35678 / DSM 2160 / CIP 103997 / JCM 8858 / NBRC 14720 / NCIMB 2260 / Gabara) (Halobacterium pharaonis).